Here is a 332-residue protein sequence, read N- to C-terminus: Glyceraldehyde-3-phosphate dehydrogenase (332 aa).

NAD(+)-binding positions include arginine 12–isoleucine 13, aspartate 34, lysine 78, and threonine 120. Residues serine 149–threonine 151, threonine 180, threonine 209–glycine 210, and arginine 232 each bind D-glyceraldehyde 3-phosphate. The Nucleophile role is filled by cysteine 150. Position 314 (asparagine 314) interacts with NAD(+).

The protein belongs to the glyceraldehyde-3-phosphate dehydrogenase family. Homotetramer.

It localises to the cytoplasm. It catalyses the reaction D-glyceraldehyde 3-phosphate + phosphate + NAD(+) = (2R)-3-phospho-glyceroyl phosphate + NADH + H(+). The protein operates within carbohydrate degradation; glycolysis; pyruvate from D-glyceraldehyde 3-phosphate: step 1/5. Functionally, catalyzes the oxidative phosphorylation of glyceraldehyde 3-phosphate (G3P) to 1,3-bisphosphoglycerate (BPG) using the cofactor NAD. The first reaction step involves the formation of a hemiacetal intermediate between G3P and a cysteine residue, and this hemiacetal intermediate is then oxidized to a thioester, with concomitant reduction of NAD to NADH. The reduced NADH is then exchanged with the second NAD, and the thioester is attacked by a nucleophilic inorganic phosphate to produce BPG. The chain is Glyceraldehyde-3-phosphate dehydrogenase (gapA) from Buchnera aphidicola subsp. Schizaphis graminum (strain Sg).